Reading from the N-terminus, the 474-residue chain is MRNLKSVTPLLMAALLWGQSLLAQASLPDFTALVEEASPAVVNISTRQKMPERSVAAQPGLPDLEGLPPMFREFFERSIPQMPRNPGGRQREAQSLGSGFIISADGYVLTNNHVVADADEIIVRLSDRSELEAKLIGADPRSDVALLKVEGKGLPTVRLGKSDELKVGEWVLAIGSPFGFDHSVTAGIVSAKGRNLPSDSYVPFIQTDVAINPGNSGGPLFNLKGEVVGINSQIFTRSGGFMGLSFAIPMEVALQVSEQLKADGKVTRGWLGVVIQEVNKDLAESFGLDRPAGALVAQVLEDGPADKGGLQVGDVILSLNGKPIVMSADLPHLVGGLKPGEKAEMDVVRDGSRKKLKVTIGTLPEEGQELAAAGSTKGGERSSNRLGVTVVELTAEQKKGLDLRGGVVVKEVLSGPAAMIGLRPGDVITHLNNQAIDSTATFAKVAQELPKNRSVSMRVLRQGRASFITFKLAE.

Positions 1 to 25 (MRNLKSVTPLLMAALLWGQSLLAQA) are cleaved as a signal peptide. Active-site charge relay system residues include H113, D143, and S216. Substrate-binding positions include 214-216 (GNS) and 271-275 (LGVVI). PDZ domains are found at residues 260-351 (LKAD…VRDG) and 357-463 (KVTI…LRQG).

This sequence belongs to the peptidase S1C family.

Its subcellular location is the periplasm. It catalyses the reaction Acts on substrates that are at least partially unfolded. The cleavage site P1 residue is normally between a pair of hydrophobic residues, such as Val-|-Val.. Functionally, might be efficient in the degradation of transiently denatured and unfolded proteins which accumulate in the periplasm following stress conditions. This chain is Probable periplasmic serine endoprotease DegP-like, found in Ectopseudomonas mendocina (strain ymp) (Pseudomonas mendocina).